The chain runs to 222 residues: Deoxyribose-phosphate aldolase (222 aa).

The Proton donor/acceptor role is filled by aspartate 92. Lysine 156 acts as the Schiff-base intermediate with acetaldehyde in catalysis. The active-site Proton donor/acceptor is lysine 185.

This sequence belongs to the DeoC/FbaB aldolase family. DeoC type 1 subfamily. Homodimer.

The protein localises to the cytoplasm. The enzyme catalyses 2-deoxy-D-ribose 5-phosphate = D-glyceraldehyde 3-phosphate + acetaldehyde. Its pathway is carbohydrate degradation; 2-deoxy-D-ribose 1-phosphate degradation; D-glyceraldehyde 3-phosphate and acetaldehyde from 2-deoxy-alpha-D-ribose 1-phosphate: step 2/2. With respect to regulation, shows high stability to high concentrations of acetaldehyde. Functionally, catalyzes a reversible aldol reaction between acetaldehyde and D-glyceraldehyde 3-phosphate to generate 2-deoxy-D-ribose 5-phosphate. This chain is Deoxyribose-phosphate aldolase, found in Aciduliprofundum boonei (strain DSM 19572 / T469).